The chain runs to 1368 residues: Cingulin (1368 aa).

Positions 9–378 (MADQHIPVGQ…KQQRTVQSEF (370 aa)) are interaction with TJP3/ZO3 and myosin. The interval 9-435 (MADQHIPVGQ…EKLPSLQVQP (427 aa)) is head. Residues 41–55 (QDSYGVAVRVQGIDG) carry the ZIM motif. 5 disordered regions span residues 71-264 (FGVQ…TKPL), 278-312 (GQVR…DTAD), 1053-1080 (SRKE…NSSR), 1163-1183 (NRSR…RSRG), and 1308-1368 (QQEI…TSSC). Residues 83–97 (NASNTSPPNYQNYSS) show a composition bias toward polar residues. Residues 101–294 (GPSRSISSES…ARRSQALKDE (194 aa)) are interaction with F-actin. 2 stretches are compositionally biased toward low complexity: residues 116–132 (PYGS…YSSA) and 200–211 (SQSSRDSAWSRS). Residues 150-295 (SSLPRPLQAS…RRSQALKDER (146 aa)) are interaction with TJP2/ZO2. Over residues 228-256 (SATSQQSTSVSNKTKKNGLSTSSPSNQSN) the composition is skewed to polar residues. A compositionally biased stretch (basic and acidic residues) spans 290-312 (ALKDERKRSQSLDGRKNYHDTAD). The segment at 377-1368 (EFQLKSTPDL…TESNLQTSSC (992 aa)) is interaction with myosin. Residues 436–1330 (GEDTISLGSQ…VMEKESKRKP (895 aa)) are a coiled coil. Over residues 1320-1338 (KVMEKESKRKPIRPAHDDD) the composition is skewed to basic and acidic residues. The interval 1331–1368 (IRPAHDDDLSSDGEFGGPYDPSSITSLLTESNLQTSSC) is tail. Residues 1352 to 1368 (SSITSLLTESNLQTSSC) show a composition bias toward polar residues.

The protein belongs to the cingulin family. In terms of assembly, parallel homodimer. Interacts with TJP1/ZO1 and TJP2/ZO2 in vivo, and TJP3/ZO3, myosin and OCLN in vitro, possibly directly. Acts as an F-actin bundling protein in vitro. In terms of tissue distribution, localized on the cytoplasmic face of tight junctions of polarized epithelia and some endothelia.

The protein localises to the cell junction. Its subcellular location is the tight junction. In terms of biological role, probably plays a role in the formation and regulation of the tight junction (TJ) paracellular permeability barrier, possibly by linking ZO proteins to the actomyosin cytoskeleton. The protein is Cingulin of Xenopus laevis (African clawed frog).